A 122-amino-acid polypeptide reads, in one-letter code: MIQMQTTLDVADNTGARAVMCIKVLGGSKRRYAGIGDIIKVSVKDAAPRGRVKKGEIYNAVVVRTAKGVRRKDGSLIRFGGNAAVLLNAKLEPIGTRIFGPVTRELRTERFMKIVSLAPEVL.

It belongs to the universal ribosomal protein uL14 family. In terms of assembly, part of the 50S ribosomal subunit. Forms a cluster with proteins L3 and L19. In the 70S ribosome, L14 and L19 interact and together make contacts with the 16S rRNA in bridges B5 and B8.

Functionally, binds to 23S rRNA. Forms part of two intersubunit bridges in the 70S ribosome. The sequence is that of Large ribosomal subunit protein uL14 from Bordetella parapertussis (strain 12822 / ATCC BAA-587 / NCTC 13253).